The sequence spans 312 residues: Homoserine O-acetyltransferase (312 aa).

The Acyl-thioester intermediate role is filled by Cys-142. Lys-163 and Ser-192 together coordinate substrate. Catalysis depends on His-235, which acts as the Proton acceptor. Residue Glu-237 is part of the active site. Arg-249 lines the substrate pocket.

The protein belongs to the MetA family.

Its subcellular location is the cytoplasm. The catalysed reaction is L-homoserine + acetyl-CoA = O-acetyl-L-homoserine + CoA. It participates in amino-acid biosynthesis; L-methionine biosynthesis via de novo pathway; O-acetyl-L-homoserine from L-homoserine: step 1/1. Functionally, transfers an acetyl group from acetyl-CoA to L-homoserine, forming acetyl-L-homoserine. The polypeptide is Homoserine O-acetyltransferase (Ruegeria sp. (strain TM1040) (Silicibacter sp.)).